The sequence spans 684 residues: DNA ligase (684 aa).

NAD(+)-binding positions include 46–50, 100–101, and E130; these read DYVYD and SL. The active-site N6-AMP-lysine intermediate is the K132. NAD(+) is bound by residues R153, E187, K303, and K327. Zn(2+)-binding residues include C421, C424, C439, and C444. Positions 604–684 constitute a BRCT domain; that stretch reads DEKNYFFNKR…DFINLSNAKK (81 aa).

The protein belongs to the NAD-dependent DNA ligase family. LigA subfamily. The cofactor is Mg(2+). Mn(2+) serves as cofactor.

It carries out the reaction NAD(+) + (deoxyribonucleotide)n-3'-hydroxyl + 5'-phospho-(deoxyribonucleotide)m = (deoxyribonucleotide)n+m + AMP + beta-nicotinamide D-nucleotide.. Functionally, DNA ligase that catalyzes the formation of phosphodiester linkages between 5'-phosphoryl and 3'-hydroxyl groups in double-stranded DNA using NAD as a coenzyme and as the energy source for the reaction. It is essential for DNA replication and repair of damaged DNA. This is DNA ligase from Oenococcus oeni (strain ATCC BAA-331 / PSU-1).